A 316-amino-acid chain; its full sequence is Olfactory receptor 4N4C (316 aa).

The Cytoplasmic portion of the chain corresponds to Met1–Leu26. The helical transmembrane segment at Val27 to Phe47 threads the bilayer. The Extracellular segment spans residues Thr48–Thr56. Residues Ala57–Val77 traverse the membrane as a helical segment. Residues Ala78–Thr99 lie on the Cytoplasmic side of the membrane. A disulfide bond links Cys97 and Cys179. Residues Gln100–Phe120 traverse the membrane as a helical segment. The Extracellular segment spans residues Asp121–Ala143. A helical transmembrane segment spans residues Met144–Leu164. Residues Arg165–Gly204 are Cytoplasmic-facing. The chain crosses the membrane as a helical span at residues Leu205–Val225. Over Arg226–Arg243 the chain is Extracellular. A helical transmembrane segment spans residues Val244–Ala264. Residues Leu265–Asp268 are Cytoplasmic-facing. Residues Lys269–Leu289 traverse the membrane as a helical segment. The Extracellular portion of the chain corresponds to Arg290–Asn316.

Belongs to the G-protein coupled receptor 1 family.

It localises to the membrane. In terms of biological role, odorant receptor. The polypeptide is Olfactory receptor 4N4C (Homo sapiens (Human)).